The chain runs to 116 residues: Ferredoxin-like protein in nif region (116 aa).

In terms of domain architecture, 4Fe-4S ferredoxin-type spans 2–29 (AYTITSQCISCKLCSSVCPTGAIKIAEN). Positions 9, 12, 15, and 19 each coordinate iron-sulfur cluster.

The polypeptide is Ferredoxin-like protein in nif region (fdxN) (Nostoc sp. (strain PCC 7120 / SAG 25.82 / UTEX 2576)).